Reading from the N-terminus, the 360-residue chain is Magnesium-protoporphyrin IX monomethyl ester [oxidative] cyclase (360 aa).

This sequence belongs to the AcsF family. It depends on Fe cation as a cofactor.

The catalysed reaction is Mg-protoporphyrin IX 13-monomethyl ester + 3 NADPH + 3 O2 + 2 H(+) = 3,8-divinyl protochlorophyllide a + 3 NADP(+) + 5 H2O. It functions in the pathway porphyrin-containing compound metabolism; chlorophyll biosynthesis (light-independent). Its function is as follows. Catalyzes the formation of the isocyclic ring in chlorophyll biosynthesis. Mediates the cyclase reaction, which results in the formation of divinylprotochlorophyllide (Pchlide) characteristic of all chlorophylls from magnesium-protoporphyrin IX 13-monomethyl ester (MgPMME). This chain is Magnesium-protoporphyrin IX monomethyl ester [oxidative] cyclase, found in Synechococcus sp. (strain WH7803).